The sequence spans 207 residues: ATP synthase subunit b 2 (207 aa).

A helical membrane pass occupies residues 53 to 72 (TYASQLLWLVITFSVFYLLM).

This sequence belongs to the ATPase B chain family. In terms of assembly, F-type ATPases have 2 components, F(1) - the catalytic core - and F(0) - the membrane proton channel. F(1) has five subunits: alpha(3), beta(3), gamma(1), delta(1), epsilon(1). F(0) has three main subunits: a(1), b(2) and c(10-14). The alpha and beta chains form an alternating ring which encloses part of the gamma chain. F(1) is attached to F(0) by a central stalk formed by the gamma and epsilon chains, while a peripheral stalk is formed by the delta and b chains.

It localises to the cell inner membrane. F(1)F(0) ATP synthase produces ATP from ADP in the presence of a proton or sodium gradient. F-type ATPases consist of two structural domains, F(1) containing the extramembraneous catalytic core and F(0) containing the membrane proton channel, linked together by a central stalk and a peripheral stalk. During catalysis, ATP synthesis in the catalytic domain of F(1) is coupled via a rotary mechanism of the central stalk subunits to proton translocation. Functionally, component of the F(0) channel, it forms part of the peripheral stalk, linking F(1) to F(0). The b'-subunit is a diverged and duplicated form of b found in plants and photosynthetic bacteria. The chain is ATP synthase subunit b 2 (atpF2) from Rhizobium leguminosarum bv. trifolii (strain WSM2304).